The chain runs to 202 residues: Translation initiation factor 2 subunit beta (202 aa).

One can recognise a TRAM domain in the interval 145 to 202 (AIEEGGTYELRIDAVGSKGDGIAKIDKYTVFVPGATKGDVVKVKIKKISGNLAFSERA).

This sequence belongs to the eIF-2-beta/eIF-5 family. As to quaternary structure, heterotrimer composed of an alpha, a beta and a gamma chain.

EIF-2 functions in the early steps of protein synthesis by forming a ternary complex with GTP and initiator tRNA. In Methanosarcina mazei (strain ATCC BAA-159 / DSM 3647 / Goe1 / Go1 / JCM 11833 / OCM 88) (Methanosarcina frisia), this protein is Translation initiation factor 2 subunit beta (eif2b).